The chain runs to 240 residues: DUP240 protein DFP1 (240 aa).

The interval 1 to 29 is disordered; sequence MQPYLKKNTHATDDPKASPLKEGSPDNPE. 2 helical membrane-spanning segments follow: residues 61-81 and 84-104; these read IMIN…DIWF and VLSP…VLQI.

The protein belongs to the DUP/COS family.

It localises to the membrane. The polypeptide is DUP240 protein DFP1 (Saccharomyces cerevisiae (Baker's yeast)).